A 610-amino-acid chain; its full sequence is DNA mismatch repair protein MutL (610 aa).

This sequence belongs to the DNA mismatch repair MutL/HexB family.

Functionally, this protein is involved in the repair of mismatches in DNA. It is required for dam-dependent methyl-directed DNA mismatch repair. May act as a 'molecular matchmaker', a protein that promotes the formation of a stable complex between two or more DNA-binding proteins in an ATP-dependent manner without itself being part of a final effector complex. This chain is DNA mismatch repair protein MutL, found in Rickettsia conorii (strain ATCC VR-613 / Malish 7).